Consider the following 1075-residue polypeptide: MLRNGNEGMSTIPGFSQIQFEGFCRFINQGLAEELEKFPTIKDPDHEISFQLFAKGYQLLEPSIKERDAVYESLTYSSELYVSARLIFGFDVQKQTISIGNIPIMNSLGTFIINGIYRIVINQILLSPGIYYRSELDHKGISIYTGTIISDWGGRSELAIDKKERIWARVSRKQKISILVLSSAMGSNLKEILDNVSYPEIFLSFPNAKEKKRIESKEKAILEFYQQFACVGGDLVFSESLCEELQKKFFQQKCELGRIGRRNMNRRLNLDIPQNSTFLLPRDVLAATDHLIGMKFETGILDDDDMNHLKNKRIRSVADLLQDQFGLALGRLQHAVQKTIRRVFIRQSKPTPQTLVTPTSTSILLITTYETFFGTYPLSQVFDQTNPLTQTVHGRKVSCLGPGGLTGRTASFRSRDIHPSHYGRICPIDTSEGINVGLTGSLAIHARIDHWWGSVESPFYEISEKAKKKKERQVVYLSPNRDEYYMIAAGNSLSLNRGIQEEQVVPARYRQEFLTIAWEQIHVRSIFPFQYFSIGGSLIPFIEHNDANRALMSSNMQRQAVPLSRSEKCIVGTGLERQTALDSRVSVIAEREGKIISTNSHKILLSSSGKTISIPLVTHRRSNKNTCMHQKPRVPRGKSIKKGQILAEGAATVGGELALGKNVLVAYMPWEGYNFEDAVLISERLVYEDIYTSFHIRKYEIQTDTTSQGSAEKITKEIPHLEEHLLRNLDRNGVVKLGSWVETGDILVGKLTPQIASESSYIAEAGLLRAIFGLEVSTSKETSLKLPIGGRGRVIDVKWIQRDPLDIMVRVYILQKREIKVGDKVAGRHGNKGIISKILPRQDMPYLQDGTPVDMVFNPLGVPSRMNVGQIFESSLGLAGDLLKKHYRIAPFDERYEQEASRKLVFSELYEASKQTKNPWVFEPEYPGKSRIFDGRTGDPFEQPVLIGKSYILKLIHQVDEKIHGRSTGPYSLVTQQPVRGRAKQGGQRIGEMEVWALEGFGVAHILQEILTYKSDHLIARQEILNATIWGKRVPNHEDPPESFRVLVRELRSLALELNHFLVSQKNFQVNREEV.

It belongs to the RNA polymerase beta chain family. As to quaternary structure, in plastids the minimal PEP RNA polymerase catalytic core is composed of four subunits: alpha, beta, beta', and beta''. When a (nuclear-encoded) sigma factor is associated with the core the holoenzyme is formed, which can initiate transcription.

It localises to the plastid. The protein resides in the chloroplast. It catalyses the reaction RNA(n) + a ribonucleoside 5'-triphosphate = RNA(n+1) + diphosphate. In terms of biological role, DNA-dependent RNA polymerase catalyzes the transcription of DNA into RNA using the four ribonucleoside triphosphates as substrates. This chain is DNA-directed RNA polymerase subunit beta, found in Oryza sativa (Rice).